The sequence spans 116 residues: Large ribosomal subunit protein uL18 (116 aa).

Belongs to the universal ribosomal protein uL18 family. In terms of assembly, part of the 50S ribosomal subunit; part of the 5S rRNA/L5/L18/L25 subcomplex. Contacts the 5S and 23S rRNAs.

This is one of the proteins that bind and probably mediate the attachment of the 5S RNA into the large ribosomal subunit, where it forms part of the central protuberance. This chain is Large ribosomal subunit protein uL18, found in Psychromonas ingrahamii (strain DSM 17664 / CCUG 51855 / 37).